Consider the following 329-residue polypeptide: 4-hydroxythreonine-4-phosphate dehydrogenase (329 aa).

Positions 136 and 137 each coordinate substrate. Positions 166, 211, and 266 each coordinate a divalent metal cation. The substrate site is built by Lys-274, Asn-283, and Arg-292.

This sequence belongs to the PdxA family. Homodimer. Zn(2+) serves as cofactor. The cofactor is Mg(2+). Requires Co(2+) as cofactor.

It is found in the cytoplasm. The catalysed reaction is 4-(phosphooxy)-L-threonine + NAD(+) = 3-amino-2-oxopropyl phosphate + CO2 + NADH. It functions in the pathway cofactor biosynthesis; pyridoxine 5'-phosphate biosynthesis; pyridoxine 5'-phosphate from D-erythrose 4-phosphate: step 4/5. Its function is as follows. Catalyzes the NAD(P)-dependent oxidation of 4-(phosphooxy)-L-threonine (HTP) into 2-amino-3-oxo-4-(phosphooxy)butyric acid which spontaneously decarboxylates to form 3-amino-2-oxopropyl phosphate (AHAP). This Escherichia coli (strain SE11) protein is 4-hydroxythreonine-4-phosphate dehydrogenase.